A 173-amino-acid chain; its full sequence is Alpha-crystallin A chain (173 aa).

N-acetylmethionine is present on Met-1. A required for complex formation with BFSP1 and BFSP2 region spans residues 1–63 (MDIAIQHPWF…RSVLDSGISE (63 aa)). Position 6 is a deamidated glutamine; partial (Gln-6). Position 45 is a phosphoserine (Ser-45). Gln-50 bears the Deamidated glutamine; partial mark. The 111-residue stretch at 52 to 162 (LFRSVLDSGI…GHSERAIPVS (111 aa)) folds into the sHSP domain. N6-acetyllysine is present on Lys-70. At Gln-90 the chain carries Deamidated glutamine; partial. Lys-99 is subject to N6-acetyllysine. His-100 contacts Zn(2+). Position 101 is a deamidated asparagine; partial (Asn-101). 2 residues coordinate Zn(2+): Glu-102 and His-107. Position 122 is a phosphoserine (Ser-122). At Asn-123 the chain carries Deamidated asparagine; partial. The tract at residues 144–173 (PKVTSGMDAGHSERAIPVSREEKPSSAPSS) is disordered. Residues 153 to 167 (GHSERAIPVSREEKP) show a composition bias toward basic and acidic residues. Zn(2+) is bound at residue His-154. Ser-162 carries O-linked (GlcNAc) serine glycosylation.

Belongs to the small heat shock protein (HSP20) family. Heteromer composed of three CRYAA and one CRYAB subunits. Inter-subunit bridging via zinc ions enhances stability, which is crucial as there is no protein turn over in the lens. Can also form homodimers and homotetramers (dimers of dimers) which serve as the building blocks of homooligomers. Within homooligomers, the zinc-binding motif is created from residues of 3 different molecules. His-100 and Glu-102 from one molecule are ligands of the zinc ion, and His-107 and His-154 residues from additional molecules complete the site with tetrahedral coordination geometry. Part of a complex required for lens intermediate filament formation composed of BFSP1, BFSP2 and CRYAA. Post-translationally, acetylation at Lys-70 may increase chaperone activity. In terms of processing, undergoes age-dependent proteolytical cleavage at the C-terminus.

Its subcellular location is the cytoplasm. The protein localises to the nucleus. Functionally, contributes to the transparency and refractive index of the lens. Acts as a chaperone, preventing aggregation of various proteins under a wide range of stress conditions. Required for the correct formation of lens intermediate filaments as part of a complex composed of BFSP1, BFSP2 and CRYAA. This Phocoena phocoena (Harbor porpoise) protein is Alpha-crystallin A chain (CRYAA).